We begin with the raw amino-acid sequence, 1217 residues long: MIRNSTNTNNIMETEVALKDWILYYHKLCEVNSGEIFSGNEIITDFDDPVLSDPLLNLKPLPKNEVTVNKDNVIKDNDYSSNGCDFAKSKFHIKGLVGLLTTASVYIGLDNSTNPSYDISQACEFDLEDNTVQQGTGRSANMNPACKVAGFNKSSVRDTIFNIFKIPKKDEKISNDMEVNNTLSRDLDYKKDLFEFVRKYFGISEEETLIGHYTGWLLQEVLIQGNLFITNSSLVYLAHLPKLTDAVVLCGKLKLRSRLKGNPRYWCVLKHSTLALYNDPSDIYFPILSIDLNHVEEISLENSLKDENTMTFVLEASSKNYKFIAGSSHSAKTWVKCLKKQLFSIKNQSKDTIGIKFPISSIIDVECQSYMNQGQSIKVKCFDGNKNYALKEYTFLFFDKDGDSFYNIISNFIPRNMNPVEASLQNSNPTIHLNSKSHFNDKIKILSAVNIDDIICDTDSFEMTSSDILSDIDENIQPLSLKHVRDISNCKNYLKEDLKTSNKMTIQDCNKKVQTSEIQLITYSKHDSRMELNDDSKYYQGNIGNDNKGILSFKNICSIWNTSPIHNKDSDNFFMTSDPFVTSINDTTLAKIKDWFNLHDNEVLHALYYAYLIKGYPVYGKLYVTNRRLYFKSCIPGVNVKMVLPLEDIEGYNEILGTNYGNFGILLTVQNEKELQFGFNSCTNRSDFENVLQRCLDICKYAIKTPELVTSRVIESESEHSRLRFFEEKFSTEGIDIPFLVEDNPYFKTKIMPTKSYNFGFLTIGSRGDVQPYIALAKGLIQEGHSVTIITHREFKSFVECHGIDFKEIAGDPTKLMSLMVEHEAINVGMLMEASSKFRGWIHDLLVTTWEACKNLKLDILIESPSAMAGIHISEALQIPYFRAFTMPWTRTRAYPHAFIVPDQKRGGSFNYLTHVIFENVFWRGICSQVNKWRVQTLGLEKTNLAQLQQNKIPFLYNISPVIFPPAIDFDEWIKVTGYWFLDESESFEPSQELETFISKARKLGKKLVYIGFGSIVVNNAKEMTRAVIDSVLETDIFCILNKGWSERLGKEELRYEEEPEYPETIFLCDSIPHDWLFPKVDAAVHHGGSGTTGATLKAGTPVVIKPFFGDQFFFASRIEDIGAGIALKKLNVSSLSNAIKKVLTDKSIKRKAVSLKKRVAKENGVTTAINCIYSELEYARSLVVKKNHKSSNIEFIQHPNNVNDTTKTVIPLTSMV.

A GRAM 1 domain is found at 195 to 232; it reads EFVRKYFGISEEETLIGHYTGWLLQEVLIQGNLFITNS. Residues 246–343 form the PH domain; the sequence is AVVLCGKLKL…WVKCLKKQLF (98 aa). The region spanning 590-656 is the GRAM 2 domain; sequence AKIKDWFNLH…EDIEGYNEIL (67 aa). Positions 766, 767, 769, 1042, 1072, 1074, 1087, 1090, 1091, 1092, 1111, and 1112 each coordinate UDP-alpha-D-glucose.

It belongs to the glycosyltransferase 28 family.

It localises to the cytoplasm. The protein resides in the membrane. It carries out the reaction a sterol + UDP-alpha-D-glucose = a sterol 3-beta-D-glucoside + UDP + H(+). The catalysed reaction is ergosterol + UDP-alpha-D-glucose = ergosteryl 3-beta-D-glucoside + UDP + H(+). Functionally, sterol glycosyltransferase responsible for the glycosylation of ergosterol to form ergosterol-glucoside. This is Sterol 3-beta-glucosyltransferase from Vanderwaltozyma polyspora (strain ATCC 22028 / DSM 70294 / BCRC 21397 / CBS 2163 / NBRC 10782 / NRRL Y-8283 / UCD 57-17) (Kluyveromyces polysporus).